The primary structure comprises 231 residues: Biosynthetic peptidoglycan transglycosylase (231 aa).

A helical membrane pass occupies residues 7-27; the sequence is LLFWLILVPILLVLLMQLYFF.

This sequence belongs to the glycosyltransferase 51 family.

The protein localises to the cell inner membrane. The catalysed reaction is [GlcNAc-(1-&gt;4)-Mur2Ac(oyl-L-Ala-gamma-D-Glu-L-Lys-D-Ala-D-Ala)](n)-di-trans,octa-cis-undecaprenyl diphosphate + beta-D-GlcNAc-(1-&gt;4)-Mur2Ac(oyl-L-Ala-gamma-D-Glu-L-Lys-D-Ala-D-Ala)-di-trans,octa-cis-undecaprenyl diphosphate = [GlcNAc-(1-&gt;4)-Mur2Ac(oyl-L-Ala-gamma-D-Glu-L-Lys-D-Ala-D-Ala)](n+1)-di-trans,octa-cis-undecaprenyl diphosphate + di-trans,octa-cis-undecaprenyl diphosphate + H(+). It participates in cell wall biogenesis; peptidoglycan biosynthesis. In terms of biological role, peptidoglycan polymerase that catalyzes glycan chain elongation from lipid-linked precursors. In Herminiimonas arsenicoxydans, this protein is Biosynthetic peptidoglycan transglycosylase.